The chain runs to 515 residues: Putative acetolactate synthase large subunit IlvX (515 aa).

Position 48 (glutamate 48) interacts with thiamine diphosphate. FAD-binding positions include 249 to 269 (FAEGAAAQLDGVKHLVLAGAR) and 283 to 302 (DLVPAGCEVHVLAEPGGAAD). The thiamine pyrophosphate binding stretch occupies residues 357 to 436 (TCGVLLPQAT…VTTVIYNNGA (80 aa)). Aspartate 407 and asparagine 434 together coordinate Mg(2+).

This sequence belongs to the TPP enzyme family. Heterodimer of large catalytic subunit and small regulatory subunit. Mg(2+) serves as cofactor. Thiamine diphosphate is required as a cofactor.

The catalysed reaction is 2 pyruvate + H(+) = (2S)-2-acetolactate + CO2. The protein operates within amino-acid biosynthesis; L-isoleucine biosynthesis; L-isoleucine from 2-oxobutanoate: step 1/4. It functions in the pathway amino-acid biosynthesis; L-valine biosynthesis; L-valine from pyruvate: step 1/4. Catalyzes the conversion of 2 pyruvate molecules into acetolactate in the first common step of the biosynthetic pathway of the branched-amino acids such as leucine, isoleucine, and valine. This Mycobacterium tuberculosis (strain ATCC 25618 / H37Rv) protein is Putative acetolactate synthase large subunit IlvX (ilvX).